A 245-amino-acid polypeptide reads, in one-letter code: Uracil-DNA glycosylase (245 aa).

Residue Asp82 is the Proton acceptor of the active site.

It belongs to the uracil-DNA glycosylase (UDG) superfamily. UNG family.

It is found in the cytoplasm. The enzyme catalyses Hydrolyzes single-stranded DNA or mismatched double-stranded DNA and polynucleotides, releasing free uracil.. Functionally, excises uracil residues from the DNA which can arise as a result of misincorporation of dUMP residues by DNA polymerase or due to deamination of cytosine. This is Uracil-DNA glycosylase from Deinococcus geothermalis (strain DSM 11300 / CIP 105573 / AG-3a).